The chain runs to 260 residues: Methylthioribulose-1-phosphate dehydratase (260 aa).

Residues 1–26 (MTPPTTGLPAENTTDDNDHLVQSDDP) are disordered. Positions 16 to 26 (DNDHLVQSDDP) are enriched in basic and acidic residues. Cys109 provides a ligand contact to substrate. Residues His127 and His129 each coordinate Zn(2+). Glu154 serves as the catalytic Proton donor/acceptor. His211 contacts Zn(2+).

It belongs to the aldolase class II family. MtnB subfamily. It depends on Zn(2+) as a cofactor.

It is found in the cytoplasm. It carries out the reaction 5-(methylsulfanyl)-D-ribulose 1-phosphate = 5-methylsulfanyl-2,3-dioxopentyl phosphate + H2O. It participates in amino-acid biosynthesis; L-methionine biosynthesis via salvage pathway; L-methionine from S-methyl-5-thio-alpha-D-ribose 1-phosphate: step 2/6. Its function is as follows. Catalyzes the dehydration of methylthioribulose-1-phosphate (MTRu-1-P) into 2,3-diketo-5-methylthiopentyl-1-phosphate (DK-MTP-1-P). The protein is Methylthioribulose-1-phosphate dehydratase of Podospora anserina (strain S / ATCC MYA-4624 / DSM 980 / FGSC 10383) (Pleurage anserina).